The primary structure comprises 286 residues: ATP synthase gamma chain (286 aa).

It belongs to the ATPase gamma chain family. F-type ATPases have 2 components, CF(1) - the catalytic core - and CF(0) - the membrane proton channel. CF(1) has five subunits: alpha(3), beta(3), gamma(1), delta(1), epsilon(1). CF(0) has three main subunits: a, b and c.

The protein resides in the cell inner membrane. In terms of biological role, produces ATP from ADP in the presence of a proton gradient across the membrane. The gamma chain is believed to be important in regulating ATPase activity and the flow of protons through the CF(0) complex. In Shewanella sediminis (strain HAW-EB3), this protein is ATP synthase gamma chain.